A 281-amino-acid polypeptide reads, in one-letter code: Cytochrome c oxidase subunit 3 (281 aa).

The next 7 membrane-spanning stretches (helical) occupy residues 34 to 54 (PWPIAVSFSLLVVTLSGVMTF), 59 to 79 (NGLFLLTLGFISLVSTMTLWF), 103 to 123 (GFVLFVVSEVFFFISIFWAFF), 148 to 168 (WEVPLLNTVILLSSGATVTYA), 179 to 199 (VIYGLIATIVLATVFTGFQGF), 220 to 240 (ATGFHGIHVLVGTIFLTVGLF), and 259 to 279 (ILYWHFVDVVWLFLFISVYWW).

Belongs to the cytochrome c oxidase subunit 3 family. In terms of assembly, component of the cytochrome c oxidase (complex IV, CIV), a multisubunit enzyme composed of a catalytic core of 3 subunits and several supernumerary subunits. The complex exists as a monomer or a dimer and forms supercomplexes (SCs) in the inner mitochondrial membrane with ubiquinol-cytochrome c oxidoreductase (cytochrome b-c1 complex, complex III, CIII).

It localises to the mitochondrion inner membrane. The enzyme catalyses 4 Fe(II)-[cytochrome c] + O2 + 8 H(+)(in) = 4 Fe(III)-[cytochrome c] + 2 H2O + 4 H(+)(out). In terms of biological role, component of the cytochrome c oxidase, the last enzyme in the mitochondrial electron transport chain which drives oxidative phosphorylation. The respiratory chain contains 3 multisubunit complexes succinate dehydrogenase (complex II, CII), ubiquinol-cytochrome c oxidoreductase (cytochrome b-c1 complex, complex III, CIII) and cytochrome c oxidase (complex IV, CIV), that cooperate to transfer electrons derived from NADH and succinate to molecular oxygen, creating an electrochemical gradient over the inner membrane that drives transmembrane transport and the ATP synthase. Cytochrome c oxidase is the component of the respiratory chain that catalyzes the reduction of oxygen to water. Electrons originating from reduced cytochrome c in the intermembrane space (IMS) are transferred via the dinuclear copper A center (CU(A)) of subunit 2 and heme A of subunit 1 to the active site in subunit 1, a binuclear center (BNC) formed by heme A3 and copper B (CU(B)). The BNC reduces molecular oxygen to 2 water molecules using 4 electrons from cytochrome c in the IMS and 4 protons from the mitochondrial matrix. The chain is Cytochrome c oxidase subunit 3 (COX3) from Rhizopus stolonifer (Rhizopus nigricans).